Reading from the N-terminus, the 476-residue chain is Transcriptional regulator claA (476 aa).

The segment at residues 25–52 (CDTCLKAKIKCSQAKPTCARCLQQGRQC) is a DNA-binding region (zn(2)-C6 fungal-type). Residues 63-92 (PSTKNLPLDQLQQPKGRTAGGTARRSLSRR) are disordered. Residues 64 to 77 (STKNLPLDQLQQPK) are compositionally biased toward polar residues.

Its subcellular location is the nucleus. Transcriptional regulator; part of the cla gene cluster that produces clavatol and ortho-quinone methide. The clavatol biosynthesis cluster cla and the terrestric acid cluster tra are both involved in the production of peniphenones and penilactones. This Penicillium crustosum (Blue mold fungus) protein is Transcriptional regulator claA.